A 424-amino-acid polypeptide reads, in one-letter code: Histidinol dehydrogenase (424 aa).

Residues Y127, Q188, and N211 each coordinate NAD(+). Residues S234, Q256, and H259 each coordinate substrate. Residues Q256 and H259 each contribute to the Zn(2+) site. Active-site proton acceptor residues include E322 and H323. Substrate-binding residues include H323, D356, E410, and H415. D356 lines the Zn(2+) pocket. Zn(2+) is bound at residue H415.

The protein belongs to the histidinol dehydrogenase family. Requires Zn(2+) as cofactor.

It catalyses the reaction L-histidinol + 2 NAD(+) + H2O = L-histidine + 2 NADH + 3 H(+). It functions in the pathway amino-acid biosynthesis; L-histidine biosynthesis; L-histidine from 5-phospho-alpha-D-ribose 1-diphosphate: step 9/9. Functionally, catalyzes the sequential NAD-dependent oxidations of L-histidinol to L-histidinaldehyde and then to L-histidine. In Methanococcus maripaludis (strain DSM 14266 / JCM 13030 / NBRC 101832 / S2 / LL), this protein is Histidinol dehydrogenase.